A 210-amino-acid chain; its full sequence is SAP domain-containing ribonucleoprotein (210 aa).

At alanine 2 the chain carries N-acetylalanine. Residues leucine 8–leucine 42 form the SAP domain. An N6-acetyllysine modification is found at lysine 10. Acidic residues predominate over residues histidine 45–glutamate 64. Positions histidine 45–glutamate 87 are disordered. Basic and acidic residues predominate over residues proline 65 to glutamate 87. Residue lysine 142 is modified to N6-acetyllysine. Residues serine 162–alanine 210 form a disordered region. Serine 163 bears the Phosphoserine mark. Over residues valine 184–threonine 193 the composition is skewed to polar residues.

This sequence belongs to the SAP domain-containing ribonucleoprotein family. Interacts with DDX39A. Interacts with FUS. Interacts (via the C-terminal domain) with DDX39B; the interaction is direct and facilitates RNA binding of DDX39B. Component of the transcription/export (TREX) complex at least composed of ALYREF/THOC4, DDX39B, SARNP/CIP29, CHTOP and the THO subcomplex; TREX seems to have dynamic structure involving ATP-dependent remodeling; in the complex interacts directly with DDX39B in a ATP-dependent manner which bridges it to ALYREF/THOC4.

The protein localises to the nucleus. Its subcellular location is the nucleus speckle. Functionally, binds both single-stranded and double-stranded DNA with higher affinity for the single-stranded form. Specifically binds to scaffold/matrix attachment region DNA. Also binds single-stranded RNA. Enhances RNA unwinding activity of DDX39A. May participate in important transcriptional or translational control of cell growth, metabolism and carcinogenesis. Component of the TREX complex which is thought to couple mRNA transcription, processing and nuclear export, and specifically associates with spliced mRNA and not with unspliced pre-mRNA. The TREX complex is recruited to spliced mRNAs by a transcription-independent mechanism, binds to mRNA upstream of the exon-junction complex (EJC) and is recruited in a splicing- and cap-dependent manner to a region near the 5' end of the mRNA where it functions in mRNA export to the cytoplasm via the TAP/NXF1 pathway. Associates with DDX39B, which facilitates RNA binding of DDX39B and likely plays a role in mRNA export. This chain is SAP domain-containing ribonucleoprotein (Sarnp), found in Mus musculus (Mouse).